A 344-amino-acid chain; its full sequence is MPIKIPSGLPARDILDSERIFALEKPEAERQRVRPLKLVILNLMPKKIETETQLLRLISKSPLQVEVDFMKTSTHEATHVSADHLVKFYETLDAFKDNYYDGLVVTGAPVEHLDFEQVDYWDEFKQILDWASTHVFSTMYLCWGAMGALNYRYGVRKELLPEKLFGVFPQYLQDEYCFLTNGFDEICLQPHSRLAGVNEGDIAHNPELQVLTWGPKSGPGLIATRDFSEVFALGHWEYGKYTLAEEYERDMKKGMTNVPFPENYFPHDDPKLEPLFAWRAHANLLWRNWLNWVYQTTPYDLSEVPQLREEKRLGTDRSIRHEPGSPRVDAFTPFSHDGYGVIRG.

Residue C142 is the Acyl-thioester intermediate of the active site. Substrate contacts are provided by K163 and S192. H235 (proton acceptor) is an active-site residue. Residue E237 is part of the active site. Residue R249 participates in substrate binding.

It belongs to the MetA family.

It is found in the cytoplasm. The catalysed reaction is L-homoserine + acetyl-CoA = O-acetyl-L-homoserine + CoA. It participates in amino-acid biosynthesis; L-methionine biosynthesis via de novo pathway; O-acetyl-L-homoserine from L-homoserine: step 1/1. Transfers an acetyl group from acetyl-CoA to L-homoserine, forming acetyl-L-homoserine. The polypeptide is Homoserine O-acetyltransferase (Bifidobacterium adolescentis (strain ATCC 15703 / DSM 20083 / NCTC 11814 / E194a)).